Here is a 538-residue protein sequence, read N- to C-terminus: Probable ribonuclease 3 (538 aa).

RNase III domains follow at residues 24–149 and 238–381; these read IKSY…LNFG and ASQM…EGYL. The DRBM domain occupies 408-477; the sequence is LISQNIEVLH…NYKDLILQLY (70 aa).

The protein belongs to the ribonuclease III family.

It carries out the reaction Endonucleolytic cleavage to 5'-phosphomonoester.. Its function is as follows. Digests double-stranded RNA. The chain is Probable ribonuclease 3 from Acanthamoeba polyphaga (Amoeba).